Reading from the N-terminus, the 481-residue chain is WASH complex subunit 1 (481 aa).

Residues 1 to 54 are required for WASH complex assembly; that stretch reads MVRMTQKRYLEGQVYSVPLIQPDLRREEAVHQITDALQYLEMISTDIFTRVSES. Disordered regions lie at residues 273-417 and 429-481; these read SVPA…SGGD and RRKG…DWEA. Pro residues predominate over residues 304–341; sequence APPPPPPPPPPPPEPTHVPVPPPGTSAAPPPPPPPPPM. The segment at 359 to 481 is VCA; that stretch reads KGAPSEVVQP…AADDEDDWEA (123 aa). The WH2 domain occupies 371 to 393; sequence GRASLLESIRNAGGIGKANLRNV. Positions 392–407 are enriched in basic and acidic residues; the sequence is NVKERKMEKKKQKEQE.

This sequence belongs to the WASH1 family. As to quaternary structure, component of the WASH complex.

The protein resides in the early endosome membrane. It is found in the recycling endosome membrane. Its function is as follows. Acts as a nucleation-promoting factor at the surface of endosomes, where it recruits and activates the Arp2/3 complex to induce actin polymerization, playing a key role in the fission of tubules that serve as transport intermediates during endosome sorting. This chain is WASH complex subunit 1, found in Danio rerio (Zebrafish).